We begin with the raw amino-acid sequence, 456 residues long: UDP-N-acetylmuramate--L-alanine ligase (456 aa).

Gly112–Thr118 contacts ATP.

The protein belongs to the MurCDEF family.

It localises to the cytoplasm. It catalyses the reaction UDP-N-acetyl-alpha-D-muramate + L-alanine + ATP = UDP-N-acetyl-alpha-D-muramoyl-L-alanine + ADP + phosphate + H(+). The protein operates within cell wall biogenesis; peptidoglycan biosynthesis. In terms of biological role, cell wall formation. The sequence is that of UDP-N-acetylmuramate--L-alanine ligase from Desulfatibacillum aliphaticivorans.